Reading from the N-terminus, the 343-residue chain is Glycerol-3-phosphate dehydrogenase [NAD(P)+] (343 aa).

S11, W12, H32, R33, and K106 together coordinate NADPH. Residues K106, G136, and S138 each coordinate sn-glycerol 3-phosphate. A140 is an NADPH binding site. Sn-glycerol 3-phosphate-binding residues include K192, D245, S255, R256, and N257. K192 functions as the Proton acceptor in the catalytic mechanism. R256 is an NADPH binding site. NADPH contacts are provided by V280 and E282.

It belongs to the NAD-dependent glycerol-3-phosphate dehydrogenase family.

The protein localises to the cytoplasm. It catalyses the reaction sn-glycerol 3-phosphate + NAD(+) = dihydroxyacetone phosphate + NADH + H(+). The enzyme catalyses sn-glycerol 3-phosphate + NADP(+) = dihydroxyacetone phosphate + NADPH + H(+). Its pathway is membrane lipid metabolism; glycerophospholipid metabolism. Functionally, catalyzes the reduction of the glycolytic intermediate dihydroxyacetone phosphate (DHAP) to sn-glycerol 3-phosphate (G3P), the key precursor for phospholipid synthesis. This is Glycerol-3-phosphate dehydrogenase [NAD(P)+] from Geobacillus thermodenitrificans (strain NG80-2).